We begin with the raw amino-acid sequence, 195 residues long: 7-methyl-GTP pyrophosphatase (195 aa).

Asp-70 functions as the Proton acceptor in the catalytic mechanism.

This sequence belongs to the Maf family. YceF subfamily. A divalent metal cation is required as a cofactor.

It is found in the cytoplasm. The catalysed reaction is N(7)-methyl-GTP + H2O = N(7)-methyl-GMP + diphosphate + H(+). Its function is as follows. Nucleoside triphosphate pyrophosphatase that hydrolyzes 7-methyl-GTP (m(7)GTP). May have a dual role in cell division arrest and in preventing the incorporation of modified nucleotides into cellular nucleic acids. The sequence is that of 7-methyl-GTP pyrophosphatase from Shewanella sp. (strain MR-4).